A 351-amino-acid polypeptide reads, in one-letter code: N-acetyl-gamma-glutamyl-phosphate reductase (351 aa).

Residue Cys154 is part of the active site.

Belongs to the NAGSA dehydrogenase family. Type 1 subfamily.

Its subcellular location is the cytoplasm. It carries out the reaction N-acetyl-L-glutamate 5-semialdehyde + phosphate + NADP(+) = N-acetyl-L-glutamyl 5-phosphate + NADPH + H(+). It participates in amino-acid biosynthesis; L-arginine biosynthesis; N(2)-acetyl-L-ornithine from L-glutamate: step 3/4. Functionally, catalyzes the NADPH-dependent reduction of N-acetyl-5-glutamyl phosphate to yield N-acetyl-L-glutamate 5-semialdehyde. The protein is N-acetyl-gamma-glutamyl-phosphate reductase of Synechocystis sp. (strain ATCC 27184 / PCC 6803 / Kazusa).